The chain runs to 256 residues: Probable aquaporin TIP-type alpha (256 aa).

Topologically, residues 1–24 (MATRRYSFGRTDEATHPDSMRASL) are cytoplasmic. The residue at position 7 (Ser7) is a Phosphoserine; by CPK. Residues 25-44 (AEFASTFIFVFAGEGSGLAL) traverse the membrane as a helical segment. Topologically, residues 45-57 (VKIYQDSAFSAGE) are vacuolar. Residues 58-77 (LLALALAHAFALFAAVSASM) traverse the membrane as a helical segment. Over 78 to 102 (HVSGGHVNPAVSFGALIGGRISVIR) the chain is Cytoplasmic. An NPA 1 motif is present at residues 85–87 (NPA). Residues 103 to 121 (AVYYWIAQLLGSIVAALVL) traverse the membrane as a helical segment. Over 122 to 143 (RLVTNNMRPSGFHVSPGVGVGH) the chain is Vacuolar. Residues 144–164 (MFILEVVMTFGLMYTVYGTAI) form a helical membrane-spanning segment. The Cytoplasmic portion of the chain corresponds to 165-169 (DPKRG). Residues 170-189 (AVSYIAPLAIGLIVGANILV) traverse the membrane as a helical segment. Residues 190 to 216 (GGPFDGACMNPALAFGPSLVGWQWHQH) lie on the Vacuolar side of the membrane. The NPA 2 motif lies at 199 to 201 (NPA). The chain crosses the membrane as a helical span at residues 217-239 (WIFWVGPLLGAALAALVYEYAVI). The Cytoplasmic segment spans residues 240–256 (PIEPPPHHHQPLATEDY).

It belongs to the MIP/aquaporin (TC 1.A.8) family. TIP (TC 1.A.8.10) subfamily. In terms of processing, phosphorylated by a tonoplast-bound calcium-dependent protein kinase. Found in all seed tissues that are alive at seed maturity, but not in tissues that lose viability during seed maturation.

Its subcellular location is the vacuole membrane. Channel protein in tonoplast. These proteins may allow the diffusion of amino acids and/or peptides from the vacuolar compartment to the cytoplasm. This chain is Probable aquaporin TIP-type alpha, found in Phaseolus vulgaris (Kidney bean).